A 415-amino-acid polypeptide reads, in one-letter code: Translation initiation factor 2 subunit gamma (415 aa).

One can recognise a tr-type G domain in the interval 7-206 (QPEVNIGVVG…GIEEYIKTPY (200 aa)). Residues 16–23 (GHVDHGKT) form a G1 region. Positions 19, 23, 44, and 46 each coordinate Mg(2+). 19-24 (DHGKTT) lines the GTP pocket. The G2 stretch occupies residues 44-48 (GMTIK). The Zn(2+) site is built by cysteine 59, cysteine 62, cysteine 74, and cysteine 77. Residues 93–96 (DAPG) form a G3 region. Residues 149 to 152 (NKVD) and 184 to 186 (SAL) each bind GTP. Positions 149 to 152 (NKVD) are G4. The interval 184–186 (SAL) is G5.

This sequence belongs to the TRAFAC class translation factor GTPase superfamily. Classic translation factor GTPase family. EIF2G subfamily. As to quaternary structure, heterotrimer composed of an alpha, a beta and a gamma chain. Requires Mg(2+) as cofactor.

It carries out the reaction GTP + H2O = GDP + phosphate + H(+). In terms of biological role, eIF-2 functions in the early steps of protein synthesis by forming a ternary complex with GTP and initiator tRNA. The chain is Translation initiation factor 2 subunit gamma from Saccharolobus solfataricus (strain ATCC 35092 / DSM 1617 / JCM 11322 / P2) (Sulfolobus solfataricus).